Reading from the N-terminus, the 336-residue chain is tRNA N6-adenosine threonylcarbamoyltransferase (336 aa).

Positions 114 and 118 each coordinate Fe cation. Substrate-binding positions include 136 to 140, Asp169, Gly182, Asp186, and Asn275; that span reads LVSGG. Asp301 contributes to the Fe cation binding site.

Belongs to the KAE1 / TsaD family. Requires Fe(2+) as cofactor.

It localises to the cytoplasm. The catalysed reaction is L-threonylcarbamoyladenylate + adenosine(37) in tRNA = N(6)-L-threonylcarbamoyladenosine(37) in tRNA + AMP + H(+). Its function is as follows. Required for the formation of a threonylcarbamoyl group on adenosine at position 37 (t(6)A37) in tRNAs that read codons beginning with adenine. Is involved in the transfer of the threonylcarbamoyl moiety of threonylcarbamoyl-AMP (TC-AMP) to the N6 group of A37, together with TsaE and TsaB. TsaD likely plays a direct catalytic role in this reaction. The protein is tRNA N6-adenosine threonylcarbamoyltransferase of Streptococcus gordonii (strain Challis / ATCC 35105 / BCRC 15272 / CH1 / DL1 / V288).